Reading from the N-terminus, the 201-residue chain is CDP-diacylglycerol--serine O-phosphatidyltransferase (201 aa).

6 helical membrane-spanning segments follow: residues 19 to 39, 57 to 77, 88 to 108, 112 to 132, 133 to 153, and 162 to 182; these read IITG…LSII, FGAE…PAYL, LISA…FGIL, GFIG…CQLI, NSYL…ISDI, and IFIY…PHFA.

The protein belongs to the CDP-alcohol phosphatidyltransferase class-I family.

It localises to the cell membrane. It carries out the reaction a CDP-1,2-diacyl-sn-glycerol + L-serine = a 1,2-diacyl-sn-glycero-3-phospho-L-serine + CMP + H(+). The protein is CDP-diacylglycerol--serine O-phosphatidyltransferase (pssA) of Methanocaldococcus jannaschii (strain ATCC 43067 / DSM 2661 / JAL-1 / JCM 10045 / NBRC 100440) (Methanococcus jannaschii).